An 82-amino-acid chain; its full sequence is Penaeidin-3d (82 aa).

The signal sequence occupies residues 1-19 (MRLVVCLVFLASFALVCQG). A Pyrrolidone carboxylic acid modification is found at Gln20. 3 disulfide bridges follow: Cys51-Cys66, Cys55-Cys73, and Cys67-Cys74. Ser81 bears the Serine amide mark.

Belongs to the penaeidin family.

It localises to the cytoplasmic granule. In terms of biological role, antibacterial and antifungal activity. Presents chitin-binding activity. The sequence is that of Penaeidin-3d from Penaeus vannamei (Whiteleg shrimp).